Reading from the N-terminus, the 475-residue chain is Ankyrin repeat, SAM and basic leucine zipper domain-containing protein 1 (475 aa).

Phosphoserine occurs at positions 17, 18, and 20. ANK repeat units follow at residues 45-74 (EKNE…SVDT), 78-107 (YGWT…NASF), 110-144 (DKQT…DPNM), 148-177 (RLMT…DVNA), 181-210 (NGYT…NKMI), and 214-243 (DGKT…PLEG). Residues 272–334 (SYTAFGDLEI…KILAALKELE (63 aa)) form the SAM domain.

Interacts with DDX4, PIWIL1, RANBP9 and TDRD1.

Its subcellular location is the cytoplasm. Its function is as follows. Plays a central role during spermatogenesis by repressing transposable elements and preventing their mobilization, which is essential for the germline integrity. Acts via the piRNA metabolic process, which mediates the repression of transposable elements during meiosis by forming complexes composed of piRNAs and Piwi proteins and governs the methylation and subsequent repression of transposons. Its association with pi-bodies suggests a participation in the primary piRNAs metabolic process. Required prior to the pachytene stage to facilitate the production of multiple types of piRNAs, including those associated with repeats involved in the regulation of retrotransposons. May act by mediating protein-protein interactions during germ cell maturation. The protein is Ankyrin repeat, SAM and basic leucine zipper domain-containing protein 1 (ASZ1) of Atelerix albiventris (Middle-African hedgehog).